Here is a 1435-residue protein sequence, read N- to C-terminus: Gag-Pol polyprotein (1435 aa).

The N-myristoyl glycine; by host moiety is linked to residue Gly-2. Residues 7-31 (VLTGSKLDAWEQIRLKPGSKKKYRL) form an interaction with Gp41 region. The segment at 8 to 43 (LTGSKLDAWEQIRLKPGSKKKYRLKHLVWASRELER) is interaction with host CALM1. Residues 12-19 (KLDAWEQI) form an interaction with host AP3D1 region. An interaction with membrane phosphatidylinositol 4,5-bisphosphate and RNA region spans residues 14–33 (DAWEQIRLKPGSKKKYRLKH). Positions 16-22 (WEQIRLK) match the Nuclear export signal motif. Positions 26 to 32 (KKKYRLK) match the Nuclear localization signal motif. Positions 73-77 (DSLQS) are interaction with membrane phosphatidylinositol 4,5-bisphosphate. The residue at position 130 (Tyr-130) is a Phosphotyrosine; by host. The tract at residues 187 to 225 (NAIGGHQGALQVLKEVINEEAVEWDRTHPPPVGPLPPGQ) is interaction with human PPIA/CYPA and NUP153. A disordered region spans residues 212 to 232 (RTHPPPVGPLPPGQIREPTGS). The dimerization/Multimerization of capsid protein p24 stretch occupies residues 276–362 (YSPVSILDIK…GGPTHKARVL (87 aa)). 2 CCHC-type zinc fingers span residues 394–411 (IKCFNCGKEGHIARNCRA) and 415–432 (KGCWKCGQEGHQMKDCRN). Residues 455-480 (TSTPISPTDGGGSEGTGESGTERGPE) are disordered. The segment covering 463-472 (DGGGSEGTGE) has biased composition (gly residues). Residues 488-492 (PQIPL) form a dimerization of protease region. Residues 507-576 (CEVLLDTGAD…TPVNIIGRNI (70 aa)) enclose the Peptidase A2 domain. The active-site For protease activity; shared with dimeric partner is Asp-512. Dimerization of protease stretches follow at residues 536 to 542 (GIGGFIK) and 575 to 587 (NILTGLGCTLNFP). One can recognise a Reverse transcriptase domain in the interval 630–820 (EGKISRIGPE…PPFLWMGYEL (191 aa)). Positions 696, 771, and 772 each coordinate Mg(2+). Positions 813–821 (FLWMGYELH) are RT 'primer grip'. Positions 984 to 1000 (WETWWADYWQATWIPEW) match the Tryptophan repeat motif motif. The region spanning 1020 to 1143 (IMGAETYYVD…IDKLVSKDIR (124 aa)) is the RNase H type-1 domain. 4 residues coordinate Mg(2+): Asp-1029, Glu-1064, Asp-1084, and Asp-1135. The segment at 1149–1190 (EGIDQAQEDHEKYHSNWKALASEFGLPPVVAKEIIASCPKCH) adopts an Integrase-type zinc-finger fold. The Zn(2+) site is built by His-1158, His-1162, Cys-1186, and Cys-1189. Positions 1200–1350 (VDCSPEVWQI…TAGERIIDIL (151 aa)) constitute an Integrase catalytic domain. The Mg(2+) site is built by Asp-1210, Asp-1262, and Glu-1298. The segment at residues 1369–1416 (FRVYYRDSRDPIWKGPAQLLWKGEGAVVIQDKGDIKVVPRRKAKIIRE) is a DNA-binding region (integrase-type).

Homotrimer; further assembles as hexamers of trimers. Interacts with gp41 (via C-terminus). Interacts with host CALM1; this interaction induces a conformational change in the Matrix protein, triggering exposure of the myristate group. Interacts with host AP3D1; this interaction allows the polyprotein trafficking to multivesicular bodies during virus assembly. Part of the pre-integration complex (PIC) which is composed of viral genome, matrix protein, Vpr and integrase. In terms of assembly, homodimer; the homodimer further multimerizes as homohexamers or homopentamers. Interacts with human PPIA/CYPA; This interaction stabilizes the capsid. Interacts with human NUP153. Interacts with host PDZD8; this interaction stabilizes the capsid. Interacts with monkey TRIM5; this interaction destabilizes the capsid. As to quaternary structure, homodimer, whose active site consists of two apposed aspartic acid residues. Heterodimer of p66 RT and p51 RT (RT p66/p51). Heterodimerization of RT is essential for DNA polymerase activity. The overall folding of the subdomains is similar in p66 RT and p51 RT but the spatial arrangements of the subdomains are dramatically different. In terms of assembly, homotetramer; may further associate as a homohexadecamer. Part of the pre-integration complex (PIC) which is composed of viral genome, matrix protein, Vpr and integrase. Interacts with human SMARCB1/INI1 and human PSIP1/LEDGF isoform 1. Interacts with human KPNA3; this interaction might play a role in nuclear import of the pre-integration complex. Interacts with human NUP153; this interaction might play a role in nuclear import of the pre-integration complex. Mg(2+) is required as a cofactor. Specific enzymatic cleavages by the viral protease yield mature proteins. The protease is released by autocatalytic cleavage. The polyprotein is cleaved during and after budding, this process is termed maturation. Proteolytic cleavage of p66 RT removes the RNase H domain to yield the p51 RT subunit. Nucleocapsid protein p7 might be further cleaved after virus entry. In terms of processing, tyrosine phosphorylated presumably in the virion by a host kinase. Phosphorylation is apparently not a major regulator of membrane association. Post-translationally, phosphorylated possibly by host MAPK1; this phosphorylation is necessary for Pin1-mediated virion uncoating. Methylated by host PRMT6, impairing its function by reducing RNA annealing and the initiation of reverse transcription.

Its subcellular location is the host cell membrane. It localises to the host endosome. The protein localises to the host multivesicular body. The protein resides in the virion membrane. It is found in the host nucleus. Its subcellular location is the host cytoplasm. It localises to the virion. It catalyses the reaction Specific for a P1 residue that is hydrophobic, and P1' variable, but often Pro.. The enzyme catalyses Endohydrolysis of RNA in RNA/DNA hybrids. Three different cleavage modes: 1. sequence-specific internal cleavage of RNA. Human immunodeficiency virus type 1 and Moloney murine leukemia virus enzymes prefer to cleave the RNA strand one nucleotide away from the RNA-DNA junction. 2. RNA 5'-end directed cleavage 13-19 nucleotides from the RNA end. 3. DNA 3'-end directed cleavage 15-20 nucleotides away from the primer terminus.. The catalysed reaction is 3'-end directed exonucleolytic cleavage of viral RNA-DNA hybrid.. It carries out the reaction DNA(n) + a 2'-deoxyribonucleoside 5'-triphosphate = DNA(n+1) + diphosphate. Its activity is regulated as follows. Protease: The viral protease is inhibited by many synthetic protease inhibitors (PIs), such as amprenavir, atazanavir, indinavir, loprinavir, nelfinavir, ritonavir and saquinavir. Use of protease inhibitors in tritherapy regimens permit more ambitious therapeutic strategies. Reverse transcriptase/ribonuclease H: RT can be inhibited either by nucleoside RT inhibitors (NRTIs) or by non nucleoside RT inhibitors (NNRTIs). NRTIs act as chain terminators, whereas NNRTIs inhibit DNA polymerization by binding a small hydrophobic pocket near the RT active site and inducing an allosteric change in this region. Classical NRTIs are abacavir, adefovir (PMEA), didanosine (ddI), lamivudine (3TC), stavudine (d4T), tenofovir (PMPA), zalcitabine (ddC), and zidovudine (AZT). Classical NNRTIs are atevirdine (BHAP U-87201E), delavirdine, efavirenz (DMP-266), emivirine (I-EBU), and nevirapine (BI-RG-587). The tritherapies used as a basic effective treatment of AIDS associate two NRTIs and one NNRTI. In terms of biological role, mediates, with Gag polyprotein, the essential events in virion assembly, including binding the plasma membrane, making the protein-protein interactions necessary to create spherical particles, recruiting the viral Env proteins, and packaging the genomic RNA via direct interactions with the RNA packaging sequence (Psi). Gag-Pol polyprotein may regulate its own translation, by the binding genomic RNA in the 5'-UTR. At low concentration, the polyprotein would promote translation, whereas at high concentration, the polyprotein would encapsidate genomic RNA and then shut off translation. Functionally, targets the polyprotein to the plasma membrane via a multipartite membrane-binding signal, that includes its myristoylated N-terminus. Matrix protein is part of the pre-integration complex. Implicated in the release from host cell mediated by Vpu. Binds to RNA. Forms the conical core that encapsulates the genomic RNA-nucleocapsid complex in the virion. Most core are conical, with only 7% tubular. The core is constituted by capsid protein hexamer subunits. The core is disassembled soon after virion entry. Host restriction factors such as TRIM5-alpha or TRIMCyp bind retroviral capsids and cause premature capsid disassembly, leading to blocks in reverse transcription. Capsid restriction by TRIM5 is one of the factors which restricts HIV-1 to the human species. Host PIN1 apparently facilitates the virion uncoating. On the other hand, interactions with PDZD8 or CYPA stabilize the capsid. Its function is as follows. Encapsulates and protects viral dimeric unspliced genomic RNA (gRNA). Binds these RNAs through its zinc fingers. Acts as a nucleic acid chaperone which is involved in rearangement of nucleic acid secondary structure during gRNA retrotranscription. Also facilitates template switch leading to recombination. As part of the polyprotein, participates in gRNA dimerization, packaging, tRNA incorporation and virion assembly. In terms of biological role, aspartyl protease that mediates proteolytic cleavages of Gag and Gag-Pol polyproteins during or shortly after the release of the virion from the plasma membrane. Cleavages take place as an ordered, step-wise cascade to yield mature proteins. This process is called maturation. Displays maximal activity during the budding process just prior to particle release from the cell. Also cleaves Nef and Vif, probably concomitantly with viral structural proteins on maturation of virus particles. Hydrolyzes host EIF4GI and PABP1 in order to shut off the capped cellular mRNA translation. The resulting inhibition of cellular protein synthesis serves to ensure maximal viral gene expression and to evade host immune response. Also mediates cleavage of host YTHDF3. Mediates cleavage of host CARD8, thereby activating the CARD8 inflammasome, leading to the clearance of latent HIV-1 in patient CD4(+) T-cells after viral reactivation; in contrast, HIV-1 can evade CARD8-sensing when its protease remains inactive in infected cells prior to viral budding. Functionally, multifunctional enzyme that converts the viral RNA genome into dsDNA in the cytoplasm, shortly after virus entry into the cell. This enzyme displays a DNA polymerase activity that can copy either DNA or RNA templates, and a ribonuclease H (RNase H) activity that cleaves the RNA strand of RNA-DNA heteroduplexes in a partially processive 3' to 5' endonucleasic mode. Conversion of viral genomic RNA into dsDNA requires many steps. A tRNA(3)-Lys binds to the primer-binding site (PBS) situated at the 5'-end of the viral RNA. RT uses the 3' end of the tRNA primer to perform a short round of RNA-dependent minus-strand DNA synthesis. The reading proceeds through the U5 region and ends after the repeated (R) region which is present at both ends of viral RNA. The portion of the RNA-DNA heteroduplex is digested by the RNase H, resulting in a ssDNA product attached to the tRNA primer. This ssDNA/tRNA hybridizes with the identical R region situated at the 3' end of viral RNA. This template exchange, known as minus-strand DNA strong stop transfer, can be either intra- or intermolecular. RT uses the 3' end of this newly synthesized short ssDNA to perform the RNA-dependent minus-strand DNA synthesis of the whole template. RNase H digests the RNA template except for two polypurine tracts (PPTs) situated at the 5'-end and near the center of the genome. It is not clear if both polymerase and RNase H activities are simultaneous. RNase H probably can proceed both in a polymerase-dependent (RNA cut into small fragments by the same RT performing DNA synthesis) and a polymerase-independent mode (cleavage of remaining RNA fragments by free RTs). Secondly, RT performs DNA-directed plus-strand DNA synthesis using the PPTs that have not been removed by RNase H as primers. PPTs and tRNA primers are then removed by RNase H. The 3' and 5' ssDNA PBS regions hybridize to form a circular dsDNA intermediate. Strand displacement synthesis by RT to the PBS and PPT ends produces a blunt ended, linear dsDNA copy of the viral genome that includes long terminal repeats (LTRs) at both ends. Catalyzes viral DNA integration into the host chromosome, by performing a series of DNA cutting and joining reactions. This enzyme activity takes place after virion entry into a cell and reverse transcription of the RNA genome in dsDNA. The first step in the integration process is 3' processing. This step requires a complex comprising the viral genome, matrix protein, Vpr and integrase. This complex is called the pre-integration complex (PIC). The integrase protein removes 2 nucleotides from each 3' end of the viral DNA, leaving recessed CA OH's at the 3' ends. In the second step, the PIC enters cell nucleus. This process is mediated through integrase and Vpr proteins, and allows the virus to infect a non dividing cell. This ability to enter the nucleus is specific of lentiviruses, other retroviruses cannot and rely on cell division to access cell chromosomes. In the third step, termed strand transfer, the integrase protein joins the previously processed 3' ends to the 5' ends of strands of target cellular DNA at the site of integration. The 5'-ends are produced by integrase-catalyzed staggered cuts, 5 bp apart. A Y-shaped, gapped, recombination intermediate results, with the 5'-ends of the viral DNA strands and the 3' ends of target DNA strands remaining unjoined, flanking a gap of 5 bp. The last step is viral DNA integration into host chromosome. This involves host DNA repair synthesis in which the 5 bp gaps between the unjoined strands are filled in and then ligated. Since this process occurs at both cuts flanking the HIV genome, a 5 bp duplication of host DNA is produced at the ends of HIV-1 integration. Alternatively, Integrase may catalyze the excision of viral DNA just after strand transfer, this is termed disintegration. This Human immunodeficiency virus type 1 group O (isolate ANT70) (HIV-1) protein is Gag-Pol polyprotein (gag-pol).